The sequence spans 344 residues: Glyceraldehyde-3-phosphate dehydrogenase (344 aa).

Residues Thr-11–Ile-12 and Gly-110 contribute to the NAD(+) site. D-glyceraldehyde 3-phosphate is bound at residue Ser-139–Asn-141. Catalysis depends on Cys-140, which acts as the Nucleophile. Position 169 (Arg-169) interacts with NAD(+). Position 195-196 (His-195–Gly-196) interacts with D-glyceraldehyde 3-phosphate. An NAD(+)-binding site is contributed by Gln-302.

Belongs to the glyceraldehyde-3-phosphate dehydrogenase family. As to quaternary structure, homotetramer.

Its subcellular location is the cytoplasm. It carries out the reaction D-glyceraldehyde 3-phosphate + phosphate + NADP(+) = (2R)-3-phospho-glyceroyl phosphate + NADPH + H(+). The enzyme catalyses D-glyceraldehyde 3-phosphate + phosphate + NAD(+) = (2R)-3-phospho-glyceroyl phosphate + NADH + H(+). It functions in the pathway carbohydrate degradation; glycolysis; pyruvate from D-glyceraldehyde 3-phosphate: step 1/5. In Pyrobaculum calidifontis (strain DSM 21063 / JCM 11548 / VA1), this protein is Glyceraldehyde-3-phosphate dehydrogenase.